The sequence spans 216 residues: Elongation factor Ts (216 aa).

The interval 81–84 (TDFV) is involved in Mg(2+) ion dislocation from EF-Tu.

The protein belongs to the EF-Ts family.

It localises to the cytoplasm. Functionally, associates with the EF-Tu.GDP complex and induces the exchange of GDP to GTP. It remains bound to the aminoacyl-tRNA.EF-Tu.GTP complex up to the GTP hydrolysis stage on the ribosome. This chain is Elongation factor Ts, found in Geobacter sp. (strain M21).